We begin with the raw amino-acid sequence, 367 residues long: MKVLAAMSGGVDSSVAAARMVDAGHEVVGVHMALSTAPGTLRTGSRGCCSKEDAADARRVADVLGIPFYVWDFAEKFKEDVINDFVSSYARGETPNPCVRCNQQIKFAALSARAVALGFDTVATGHYARLSGGRLRRAVDRDKDQSYVLAVLTAQQLRHAAFPIGDTPKRQIRAEAARRGLAVANKPDSHDICFIPSGNTKAFLGERIGVRRGVVVDADGVVLASHDGVHGFTIGQRRGLGIAGPGPNGRPRYVTAIDADTATVHVGDVTDLDVQTLTGRAPVFTAGAAPSGPVDCVVQVRAHGETVSAVAELIGDALFVQLHAPLRGVARGQTLVLYRPDPAGDEVLGSATIAGASGLSTGGNPGA.

ATP is bound by residues 6–13 and methionine 32; that span reads AMSGGVDS. The active-site Nucleophile is the cysteine 101. Residues cysteine 101 and cysteine 193 are joined by a disulfide bond. ATP is bound at residue glycine 125. Residues 143-145 form an interaction with tRNA region; the sequence is KDQ. The Cysteine persulfide intermediate role is filled by cysteine 193.

The protein belongs to the MnmA/TRMU family.

The protein localises to the cytoplasm. It catalyses the reaction S-sulfanyl-L-cysteinyl-[protein] + uridine(34) in tRNA + AH2 + ATP = 2-thiouridine(34) in tRNA + L-cysteinyl-[protein] + A + AMP + diphosphate + H(+). In terms of biological role, catalyzes the 2-thiolation of uridine at the wobble position (U34) of tRNA, leading to the formation of s(2)U34. This Mycobacterium tuberculosis (strain CDC 1551 / Oshkosh) protein is tRNA-specific 2-thiouridylase MnmA.